A 167-amino-acid polypeptide reads, in one-letter code: 6,7-dimethyl-8-ribityllumazine synthase (167 aa).

Residues phenylalanine 24, 58–60, and 82–84 contribute to the 5-amino-6-(D-ribitylamino)uracil site; these read ALE and AVV. 87 to 88 is a binding site for (2S)-2-hydroxy-3-oxobutyl phosphate; it reads ET. Histidine 90 acts as the Proton donor in catalysis. Residue asparagine 115 participates in 5-amino-6-(D-ribitylamino)uracil binding. Arginine 129 is a binding site for (2S)-2-hydroxy-3-oxobutyl phosphate.

This sequence belongs to the DMRL synthase family.

The catalysed reaction is (2S)-2-hydroxy-3-oxobutyl phosphate + 5-amino-6-(D-ribitylamino)uracil = 6,7-dimethyl-8-(1-D-ribityl)lumazine + phosphate + 2 H2O + H(+). It participates in cofactor biosynthesis; riboflavin biosynthesis; riboflavin from 2-hydroxy-3-oxobutyl phosphate and 5-amino-6-(D-ribitylamino)uracil: step 1/2. Its function is as follows. Catalyzes the formation of 6,7-dimethyl-8-ribityllumazine by condensation of 5-amino-6-(D-ribitylamino)uracil with 3,4-dihydroxy-2-butanone 4-phosphate. This is the penultimate step in the biosynthesis of riboflavin. This is 6,7-dimethyl-8-ribityllumazine synthase from Cupriavidus pinatubonensis (strain JMP 134 / LMG 1197) (Cupriavidus necator (strain JMP 134)).